The primary structure comprises 353 residues: uncharacterized protein (353 aa).

Residues 233 to 245 (ASCSNNEPSASLE) are compositionally biased toward polar residues. The disordered stretch occupies residues 233-265 (ASCSNNEPSASLESESRHFSPVNSLSPSSLSTD). The segment covering 252–263 (SPVNSLSPSSLS) has biased composition (low complexity).

This is an uncharacterized protein from Saccharomyces cerevisiae (strain ATCC 204508 / S288c) (Baker's yeast).